The sequence spans 267 residues: Methylglyoxal reductase DkgB (267 aa).

The active-site Proton donor is Tyr-39. His-97 is a binding site for substrate. NADP(+) is bound at residue 179-231 (MTLAYGKALKDEVIARIAAKHNATPAQVILAWAMGEGYSVIPSSTKRENLESN).

The protein belongs to the aldo/keto reductase family. Monomer.

Its subcellular location is the cytoplasm. The catalysed reaction is hydroxyacetone + NADP(+) = methylglyoxal + NADPH + H(+). Functionally, aldo-keto reductase that significantly contributes to cellular methylglyoxal detoxification by catalyzing the NADPH-dependent conversion of methylglyoxal to acetol. This Escherichia coli O157:H7 protein is Methylglyoxal reductase DkgB.